The sequence spans 63 residues: Large ribosomal subunit protein uL29 (63 aa).

This sequence belongs to the universal ribosomal protein uL29 family.

The polypeptide is Large ribosomal subunit protein uL29 (Pectobacterium carotovorum subsp. carotovorum (strain PC1)).